The sequence spans 444 residues: Xylose isomerase (444 aa).

Catalysis depends on residues histidine 101 and aspartate 104. Residues glutamate 232, glutamate 268, histidine 271, aspartate 296, aspartate 307, aspartate 309, and aspartate 339 each contribute to the Mg(2+) site.

Belongs to the xylose isomerase family. Homotetramer. Mg(2+) is required as a cofactor.

Its subcellular location is the cytoplasm. It carries out the reaction alpha-D-xylose = alpha-D-xylulofuranose. In Thermotoga sp. (strain RQ2), this protein is Xylose isomerase.